Reading from the N-terminus, the 45-residue chain is DVCDSLVGGRCIHNGCYCERSAPNGNCCDTAGCTVLWWCPGTKFD.

Cystine bridges form between Cys3/Cys16, Cys11/Cys28, Cys18/Cys33, and Cys27/Cys39. Pro23 is modified (4-hydroxyproline). A 6'-bromotryptophan mark is found at Trp37 and Trp38. Position 40 is a 4-hydroxyproline (Pro40).

As to expression, expressed by the venom duct.

Its subcellular location is the secreted. Its function is as follows. Mu-conotoxins block voltage-gated sodium channels. This toxin reversibly blocks voltage-gated sodium channel in cephalopods, with no alteration in the voltage dependence of sodium conductance or on the kinetics of inactivation. This Californiconus californicus (California cone) protein is Mu-conotoxin-like Cal 12.1.2g.